The sequence spans 418 residues: Diaminopimelate decarboxylase (418 aa).

The residue at position 53 (Lys-53) is an N6-(pyridoxal phosphate)lysine. Pyridoxal 5'-phosphate-binding positions include Gly-223 and 264–267; that span reads EPGR. The substrate site is built by Arg-267, Arg-303, and Tyr-307. Catalysis depends on Cys-338, which acts as the Proton donor. Residues Glu-339 and Tyr-374 each contribute to the substrate site. Tyr-374 lines the pyridoxal 5'-phosphate pocket.

The protein belongs to the Orn/Lys/Arg decarboxylase class-II family. LysA subfamily. As to quaternary structure, homodimer. Pyridoxal 5'-phosphate is required as a cofactor.

It catalyses the reaction meso-2,6-diaminopimelate + H(+) = L-lysine + CO2. It functions in the pathway amino-acid biosynthesis; L-lysine biosynthesis via DAP pathway; L-lysine from DL-2,6-diaminopimelate: step 1/1. Specifically catalyzes the decarboxylation of meso-diaminopimelate (meso-DAP) to L-lysine. The sequence is that of Diaminopimelate decarboxylase from Buchnera aphidicola subsp. Baizongia pistaciae (strain Bp).